The chain runs to 376 residues: Alanine racemase (376 aa).

Catalysis depends on lysine 36, which acts as the Proton acceptor; specific for D-alanine. Lysine 36 carries the N6-(pyridoxal phosphate)lysine modification. Arginine 134 contributes to the substrate binding site. The Proton acceptor; specific for L-alanine role is filled by tyrosine 266. Methionine 314 is a substrate binding site.

The protein belongs to the alanine racemase family. Pyridoxal 5'-phosphate serves as cofactor.

The enzyme catalyses L-alanine = D-alanine. It participates in amino-acid biosynthesis; D-alanine biosynthesis; D-alanine from L-alanine: step 1/1. Functionally, catalyzes the interconversion of L-alanine and D-alanine. May also act on other amino acids. This Nitratidesulfovibrio vulgaris (strain ATCC 29579 / DSM 644 / CCUG 34227 / NCIMB 8303 / VKM B-1760 / Hildenborough) (Desulfovibrio vulgaris) protein is Alanine racemase (alr).